Consider the following 274-residue polypeptide: MSLQETIIQELGVKPVIDAQEEIRRSIDFLKRYLKKHPFLKTFVLGISGGQDSTLAGRLAQLAMEELRAETGDDSYKFIAVRLPYGVQADEADAQKALAFIQPDVSLVVNIKESADAMTAAVEATGSPVSDFNKGNIKARCRMIAQYALAGFHSGAVIGTDHAAENITGFFTKFGDGGADILPLYRLNKRQGKQLLQKLGAEPALYEKIPTADLEEDKPGLADEVALGVTYAEIDDYLEGKTISPEAQATIENWWHKGQHKRHLPITVFDDFWE.

ATP is bound at residue 46–53 (GISGGQDS). D52 serves as a coordination point for Mg(2+). R140 contacts deamido-NAD(+). T160 lines the ATP pocket. E165 is a Mg(2+) binding site. The deamido-NAD(+) site is built by K173 and D180. 2 residues coordinate ATP: K189 and T211. 260–261 (HK) provides a ligand contact to deamido-NAD(+).

The protein belongs to the NAD synthetase family. As to quaternary structure, homodimer.

The catalysed reaction is deamido-NAD(+) + NH4(+) + ATP = AMP + diphosphate + NAD(+) + H(+). The protein operates within cofactor biosynthesis; NAD(+) biosynthesis; NAD(+) from deamido-NAD(+) (ammonia route): step 1/1. Catalyzes the ATP-dependent amidation of deamido-NAD to form NAD. Uses ammonia as a nitrogen source. In Streptococcus pneumoniae serotype 19F (strain G54), this protein is NH(3)-dependent NAD(+) synthetase.